The sequence spans 546 residues: (-)-5-epieremophilene synthase STPS3 (546 aa).

The Mg(2+) site is built by Asp299, Asp303, Asp442, Thr446, and Glu450. The DDXXD motif signature appears at 299–303; the sequence is DDTYD.

Belongs to the terpene synthase family. Tpsa subfamily. As to quaternary structure, monomer. Requires Mg(2+) as cofactor. In terms of tissue distribution, highly expressed in flowers and at lower levels in leaves.

The enzyme catalyses (2E,6E)-farnesyl diphosphate = (-)-5-epi-eremophilene + diphosphate. It participates in secondary metabolite biosynthesis; terpenoid biosynthesis. Sesquiterpene synthase that catalyzes the conversion of farnesyl diphosphate to (-)-5-epi-eremophilene. The polypeptide is (-)-5-epieremophilene synthase STPS3 (Salvia miltiorrhiza (Chinese sage)).